The sequence spans 428 residues: Glutamate-1-semialdehyde 2,1-aminomutase (428 aa).

Position 267 is an N6-(pyridoxal phosphate)lysine (lysine 267).

Belongs to the class-III pyridoxal-phosphate-dependent aminotransferase family. HemL subfamily. In terms of assembly, homodimer. Requires pyridoxal 5'-phosphate as cofactor.

It is found in the cytoplasm. It catalyses the reaction (S)-4-amino-5-oxopentanoate = 5-aminolevulinate. It functions in the pathway porphyrin-containing compound metabolism; protoporphyrin-IX biosynthesis; 5-aminolevulinate from L-glutamyl-tRNA(Glu): step 2/2. The sequence is that of Glutamate-1-semialdehyde 2,1-aminomutase from Sulfurihydrogenibium sp. (strain YO3AOP1).